The chain runs to 456 residues: MGQSMSCGSRPEHGIFASVQCGDIITIRRVMATEPSLLNQTTPYDRHSVLHVAAANGQIEILSLLLERFTNPDLLNRHKQTPLMLAAMYGRISCVKKLAEVGANILMFDSVNRRTCLHYAAYYGHANCVQAILSAAQSSPVAVHWGYARFVNIRDDKGATPLHLAARQRRPECVNVLLDSGSLVCASTSVYGSPGSTPLHLAARSGSIDCVRKLLAWGADRLQRDASGRIPYVVAMKHKHGACGALLNPSSAEPLVWPSPLKFISELNDEAKLLLEQALMEANREREKTILKGTAYSLPSPSFSDTDDNMSEVSDTELCCICFEQVCTIEVKDCGHQMCAQCTLALCCHNKPNPTTSTVTPPVCPFCRSTIACLVVAQNNNNNNEKSKSLDDVVVVDREAGDVSSSKFRKHRRSINLGEESSSFMGLSTIGSFGRITGRGSGRIAAENELMDKPIL.

ANK repeat units follow at residues 45-74 (DRHS…NPDL), 78-107 (HKQT…NILM), 112-141 (NRRT…SSPV), 157-186 (KGAT…LVCA), and 194-224 (PGST…RLQR). An RING-type zinc finger spans residues 319 to 368 (CCICFEQVCTIEVKDCGHQMCAQCTLALCCHNKPNPTTSTVTPPVCPFCR).

The catalysed reaction is S-ubiquitinyl-[E2 ubiquitin-conjugating enzyme]-L-cysteine + [acceptor protein]-L-lysine = [E2 ubiquitin-conjugating enzyme]-L-cysteine + N(6)-ubiquitinyl-[acceptor protein]-L-lysine.. It participates in protein modification; protein ubiquitination. In terms of biological role, no E3 ubiquitin-protein ligase activity observed when associated with the E2 enzyme UBC8 in vitro. The polypeptide is Putative E3 ubiquitin-protein ligase XBAT31 (XBAT31) (Arabidopsis thaliana (Mouse-ear cress)).